The following is a 339-amino-acid chain: Glyceraldehyde-3-phosphate dehydrogenase (339 aa).

NAD(+) is bound by residues 13-14 (RI), Asp-35, and Lys-84. D-glyceraldehyde 3-phosphate-binding positions include 156–158 (SCT), Thr-187, 216–217 (TG), and Arg-239. Cys-157 (nucleophile) is an active-site residue. An NAD(+)-binding site is contributed by Asn-321.

This sequence belongs to the glyceraldehyde-3-phosphate dehydrogenase family. In terms of assembly, homotetramer.

It localises to the cytoplasm. It catalyses the reaction D-glyceraldehyde 3-phosphate + phosphate + NAD(+) = (2R)-3-phospho-glyceroyl phosphate + NADH + H(+). Its pathway is carbohydrate degradation; glycolysis; pyruvate from D-glyceraldehyde 3-phosphate: step 1/5. This is Glyceraldehyde-3-phosphate dehydrogenase (G3PD) from Brugia malayi (Filarial nematode worm).